Reading from the N-terminus, the 289-residue chain is Rhodopsin (289 aa).

Topologically, residues 1 to 7 are extracellular; the sequence is YLVNPAG. Residues 8–32 traverse the membrane as a helical segment; it reads YAALGAYMFLLILIGFPVNFLTLYV. At 33–44 the chain is on the cytoplasmic side; it reads TLEHKKLRTPLN. A helical transmembrane segment spans residues 45–67; it reads YILLNLAVADLFMVLGGFTTTMY. Residues 68 to 81 lie on the Extracellular side of the membrane; sequence TSMHGYFVLGRLGC. Residues C81 and C158 are joined by a disulfide bond. Residues 82 to 104 traverse the membrane as a helical segment; it reads NLEGFFATLGGEIALWSLVVLAI. A 'Ionic lock' involved in activated form stabilization motif is present at residues 105-107; sequence ERW. The Cytoplasmic portion of the chain corresponds to 105-123; it reads ERWIVGLKPIRNFRFTEDH. A helical transmembrane segment spans residues 124–144; it reads AIMGLAFSWVMALSCAVPPLA. The Extracellular segment spans residues 145-173; sequence GWLRYIPEGIQGSCGVDYYTRAEGFNNES. An N-linked (GlcNAc...) asparagine glycan is attached at N171. The chain crosses the membrane as a helical span at residues 174 to 195; the sequence is FVIYMFTVHFLIPLSVIFFCYG. At 196–223 the chain is on the cytoplasmic side; that stretch reads RLLCAVKEAAAAQQESETTQRAEKEVSR. A helical membrane pass occupies residues 224-245; sequence MVVIMVIGFLVCWLPYASVAWW. Residues 246-257 are Extracellular-facing; sequence IFCNQGSDFGPI. The helical transmembrane segment at 258–279 threads the bilayer; that stretch reads FMTLPSFFAKRPAIYNPMIYIC. Position 267 is an N6-(retinylidene)lysine (K267). Residues 280 to 289 lie on the Cytoplasmic side of the membrane; the sequence is MNKQFRHCMI.

The protein belongs to the G-protein coupled receptor 1 family. Opsin subfamily. Phosphorylated on some or all of the serine and threonine residues present in the C-terminal region. In terms of processing, contains one covalently linked retinal chromophore.

The protein localises to the membrane. Its subcellular location is the cell projection. The protein resides in the cilium. It is found in the photoreceptor outer segment. Photoreceptor required for image-forming vision at low light intensity. While most salt water fish species use retinal as chromophore, most freshwater fish use 3-dehydroretinal, or a mixture of retinal and 3-dehydroretinal. Light-induced isomerization of 11-cis to all-trans retinal triggers a conformational change that activates signaling via G-proteins. Subsequent receptor phosphorylation mediates displacement of the bound G-protein alpha subunit by arrestin and terminates signaling. This chain is Rhodopsin (rho), found in Limnocottus pallidus (Ray-finned fish).